The sequence spans 1268 residues: Vigilin (1268 aa).

The residue at position 2 (Ser2) is an N-acetylserine. Thr8 bears the Phosphothreonine mark. 3 positions are modified to phosphoserine: Ser11, Ser31, and Ser35. 14 consecutive KH domains span residues 158 to 229 (PKEH…RLEV), 230 to 302 (EKAF…AVEV), 303 to 371 (KKSQ…SVAA), 372 to 442 (PSWL…EINI), 443 to 514 (DHKF…DLII), 515 to 588 (EQRF…SVPI), 589 to 660 (FKQF…EVSI), 661 to 734 (PAKL…DIRA), 735 to 807 (KPEY…SMLV), 808 to 880 (DPKH…ECAI), 881 to 979 (PQKF…EVEV), 980 to 1059 (PFDL…SVTV), 1060 to 1134 (DPKY…DVPL), and 1135 to 1209 (DHRV…ALQV). A phosphothreonine mark is found at Thr295 and Thr296. The residue at position 317 (Ser317) is a Phosphoserine. Tyr437 bears the Phosphotyrosine mark. Ser645 bears the Phosphoserine mark. The disordered stretch occupies residues 914–944 (ENAVHSTEPVVQENGDEAGEGREAKDCDPGS). Basic and acidic residues predominate over residues 932–944 (GEGREAKDCDPGS). Lys991 carries the N6-acetyllysine modification. Residues 1233-1268 (WTASSSEKAPDMSSSEEFPSFGAQVAPKTLPWGPKR) are disordered. The span at 1234 to 1249 (TASSSEKAPDMSSSEE) shows a compositional bias: polar residues. Ser1247 and Ser1252 each carry phosphoserine.

The protein localises to the cytoplasm. Its subcellular location is the nucleus. Functionally, appears to play a role in cell sterol metabolism. It may function to protect cells from over-accumulation of cholesterol. The chain is Vigilin (HDLBP) from Homo sapiens (Human).